A 430-amino-acid polypeptide reads, in one-letter code: GTPase Obg (430 aa).

Residues 1–158 enclose the Obg domain; that stretch reads MFVDQVKISL…LEVTLELKLL (158 aa). A disordered region spans residues 118–145; that stretch reads RGGRGGRGNSRFATPRNPAPDFSENGEP. Positions 159–329 constitute an OBG-type G domain; the sequence is ADVGLVGFPS…LLYQIADKLE (171 aa). Residues 165–172, 190–194, 212–215, 282–285, and 310–312 each bind GTP; these read GFPSVGKS, FTTIK, DLPG, NKMD, and STI. Residues serine 172 and threonine 192 each coordinate Mg(2+). Positions 352 to 430 constitute an OCT domain; that stretch reads KHTPSADKFT…ILGGEFEFVE (79 aa).

The protein belongs to the TRAFAC class OBG-HflX-like GTPase superfamily. OBG GTPase family. In terms of assembly, monomer. Mg(2+) is required as a cofactor.

Its subcellular location is the cytoplasm. An essential GTPase which binds GTP, GDP and possibly (p)ppGpp with moderate affinity, with high nucleotide exchange rates and a fairly low GTP hydrolysis rate. Plays a role in control of the cell cycle, stress response, ribosome biogenesis and in those bacteria that undergo differentiation, in morphogenesis control. The sequence is that of GTPase Obg from Staphylococcus epidermidis (strain ATCC 35984 / DSM 28319 / BCRC 17069 / CCUG 31568 / BM 3577 / RP62A).